Consider the following 131-residue polypeptide: MKTVQVNIVTPDGPVYQADVEMVSVRAESGELGILAGHVPMVAPLKIGAVRLKHSGSTELVAVSGGFVEVRPEQVTILAQAAETSDKVDVDRAKSAKQRAEEHLNHPNESDVRRAELALKRALNRLNVAGK.

This sequence belongs to the ATPase epsilon chain family. F-type ATPases have 2 components, CF(1) - the catalytic core - and CF(0) - the membrane proton channel. CF(1) has five subunits: alpha(3), beta(3), gamma(1), delta(1), epsilon(1). CF(0) has three main subunits: a, b and c.

Its subcellular location is the cell membrane. Its function is as follows. Produces ATP from ADP in the presence of a proton gradient across the membrane. The polypeptide is ATP synthase epsilon chain (Bacillus pumilus (strain SAFR-032)).